Reading from the N-terminus, the 151-residue chain is Ribosome maturation factor RimP (151 aa).

Belongs to the RimP family.

It is found in the cytoplasm. Its function is as follows. Required for maturation of 30S ribosomal subunits. This Pasteurella multocida (strain Pm70) protein is Ribosome maturation factor RimP.